Here is a 156-residue protein sequence, read N- to C-terminus: ATP synthase subunit b (156 aa).

A helical membrane pass occupies residues 7 to 29; that stretch reads LFAQMVVFLVLAWFTMKFVWPPL.

It belongs to the ATPase B chain family. F-type ATPases have 2 components, F(1) - the catalytic core - and F(0) - the membrane proton channel. F(1) has five subunits: alpha(3), beta(3), gamma(1), delta(1), epsilon(1). F(0) has three main subunits: a(1), b(2) and c(10-14). The alpha and beta chains form an alternating ring which encloses part of the gamma chain. F(1) is attached to F(0) by a central stalk formed by the gamma and epsilon chains, while a peripheral stalk is formed by the delta and b chains.

Its subcellular location is the cell inner membrane. F(1)F(0) ATP synthase produces ATP from ADP in the presence of a proton or sodium gradient. F-type ATPases consist of two structural domains, F(1) containing the extramembraneous catalytic core and F(0) containing the membrane proton channel, linked together by a central stalk and a peripheral stalk. During catalysis, ATP synthesis in the catalytic domain of F(1) is coupled via a rotary mechanism of the central stalk subunits to proton translocation. Its function is as follows. Component of the F(0) channel, it forms part of the peripheral stalk, linking F(1) to F(0). The sequence is that of ATP synthase subunit b from Burkholderia pseudomallei (strain 668).